The following is a 182-amino-acid chain: Large ribosomal subunit protein uL5 (182 aa).

It belongs to the universal ribosomal protein uL5 family. Part of the 50S ribosomal subunit; part of the 5S rRNA/L5/L18/L25 subcomplex. Contacts the 5S rRNA and the P site tRNA. Forms a bridge to the 30S subunit in the 70S ribosome.

Functionally, this is one of the proteins that bind and probably mediate the attachment of the 5S RNA into the large ribosomal subunit, where it forms part of the central protuberance. In the 70S ribosome it contacts protein S13 of the 30S subunit (bridge B1b), connecting the 2 subunits; this bridge is implicated in subunit movement. Contacts the P site tRNA; the 5S rRNA and some of its associated proteins might help stabilize positioning of ribosome-bound tRNAs. In Thermus aquaticus, this protein is Large ribosomal subunit protein uL5.